The sequence spans 71 residues: uncharacterized protein (71 aa).

The region spanning Ile5–Ile59 is the HTH cro/C1-type domain. Positions Gln16–Lys35 form a DNA-binding region, H-T-H motif.

This is an uncharacterized protein from Archaeoglobus fulgidus (strain ATCC 49558 / DSM 4304 / JCM 9628 / NBRC 100126 / VC-16).